The sequence spans 188 residues: Cell division protein ZapC (188 aa).

It belongs to the ZapC family. In terms of assembly, interacts directly with FtsZ.

It localises to the cytoplasm. In terms of biological role, contributes to the efficiency of the cell division process by stabilizing the polymeric form of the cell division protein FtsZ. Acts by promoting interactions between FtsZ protofilaments and suppressing the GTPase activity of FtsZ. The chain is Cell division protein ZapC from Psychromonas ingrahamii (strain DSM 17664 / CCUG 51855 / 37).